Here is a 142-residue protein sequence, read N- to C-terminus: MFDIGASELLVLVIVAIVVIGPKDLPLALRTAGRWVAKMRRVSNHFRAGIETMIREAEMEEMERKWKEQNERIMRETAAQETAAAQGQTPAAAEDQNDPFPTPLAADAPHTDPVMTGPMPPEAKVEARVEEAPAARPGSQQP.

A helical transmembrane segment spans residues 1 to 21 (MFDIGASELLVLVIVAIVVIG). Positions 75–142 (RETAAQETAA…PAARPGSQQP (68 aa)) are disordered. Positions 76 to 94 (ETAAQETAAAQGQTPAAAE) are enriched in low complexity. The span at 123–133 (AKVEARVEEAP) shows a compositional bias: basic and acidic residues.

It belongs to the TatB family. The Tat system comprises two distinct complexes: a TatABC complex, containing multiple copies of TatA, TatB and TatC subunits, and a separate TatA complex, containing only TatA subunits. Substrates initially bind to the TatABC complex, which probably triggers association of the separate TatA complex to form the active translocon.

It localises to the cell inner membrane. Its function is as follows. Part of the twin-arginine translocation (Tat) system that transports large folded proteins containing a characteristic twin-arginine motif in their signal peptide across membranes. Together with TatC, TatB is part of a receptor directly interacting with Tat signal peptides. TatB may form an oligomeric binding site that transiently accommodates folded Tat precursor proteins before their translocation. The sequence is that of Sec-independent protein translocase protein TatB from Novosphingobium aromaticivorans (strain ATCC 700278 / DSM 12444 / CCUG 56034 / CIP 105152 / NBRC 16084 / F199).